The sequence spans 526 residues: Peptide chain release factor 3 (526 aa).

The 270-residue stretch at 8–277 (NKRRTFAIIS…GLTQWAPAPQ (270 aa)) folds into the tr-type G domain. GTP contacts are provided by residues 17–24 (SHPDAGKT), 85–89 (DTPGH), and 139–142 (NKLD).

It belongs to the TRAFAC class translation factor GTPase superfamily. Classic translation factor GTPase family. PrfC subfamily.

Its subcellular location is the cytoplasm. Increases the formation of ribosomal termination complexes and stimulates activities of RF-1 and RF-2. It binds guanine nucleotides and has strong preference for UGA stop codons. It may interact directly with the ribosome. The stimulation of RF-1 and RF-2 is significantly reduced by GTP and GDP, but not by GMP. The sequence is that of Peptide chain release factor 3 from Histophilus somni (strain 129Pt) (Haemophilus somnus).